The following is a 244-amino-acid chain: Methylthioribulose-1-phosphate dehydratase (244 aa).

Cysteine 89 provides a ligand contact to substrate. Zn(2+)-binding residues include histidine 107 and histidine 109. Glutamate 130 (proton donor/acceptor) is an active-site residue. Histidine 192 lines the Zn(2+) pocket.

Belongs to the aldolase class II family. MtnB subfamily. Zn(2+) is required as a cofactor.

The protein resides in the cytoplasm. It carries out the reaction 5-(methylsulfanyl)-D-ribulose 1-phosphate = 5-methylsulfanyl-2,3-dioxopentyl phosphate + H2O. It participates in amino-acid biosynthesis; L-methionine biosynthesis via salvage pathway; L-methionine from S-methyl-5-thio-alpha-D-ribose 1-phosphate: step 2/6. Catalyzes the dehydration of methylthioribulose-1-phosphate (MTRu-1-P) into 2,3-diketo-5-methylthiopentyl-1-phosphate (DK-MTP-1-P). The chain is Methylthioribulose-1-phosphate dehydratase from Saccharomyces cerevisiae (strain AWRI1631) (Baker's yeast).